The sequence spans 263 residues: Probable septum site-determining protein MinC (263 aa).

The interval 107–159 is disordered; the sequence is LPPSGARERPLDIKDSAPRKPAEEPSPSAGEARPEPAKAEEKPADPVSRPTKV. 2 stretches are compositionally biased toward basic and acidic residues: residues 112–129 and 138–150; these read ARER…KPAE and ARPE…EKPA.

It belongs to the MinC family. As to quaternary structure, interacts with MinD and FtsZ.

Its function is as follows. Cell division inhibitor that blocks the formation of polar Z ring septums. Rapidly oscillates between the poles of the cell to destabilize FtsZ filaments that have formed before they mature into polar Z rings. Prevents FtsZ polymerization. This is Probable septum site-determining protein MinC from Pseudomonas aeruginosa (strain UCBPP-PA14).